The chain runs to 321 residues: MSKPIQMERGVKYRDADKMALIPVKTVMTERTEILRKPEWMKIKLPADSSRIQGIKSAMRKNGLHSVCEEASCPNLAECFNHGTATFMILGAICTRRCPFCDVAHGRPMAPDTNEPVKLAQTIKDMALRYVVITSVDRDDLRDGGAQHFADCISAIREKNPSIKIETLVPDFRGRMDRALEILTATPPDVFNHNLENVPRVYRQVRPGANYEWSLKLLEKFKEAHPDIPTKSGLMVGLGETNEEILDVMRDLRRHGVTMLTLGQYLQPSRHHLPVQRYVSPQEFDEMKEEALAMGFTHAACGPFVRSSYHADLQAKGEEVK.

[4Fe-4S] cluster-binding residues include cysteine 68, cysteine 73, cysteine 79, cysteine 94, cysteine 98, cysteine 101, and serine 308. Residues 80–297 enclose the Radical SAM core domain; sequence FNHGTATFMI…KEEALAMGFT (218 aa).

Belongs to the radical SAM superfamily. Lipoyl synthase family. [4Fe-4S] cluster serves as cofactor.

Its subcellular location is the cytoplasm. It carries out the reaction [[Fe-S] cluster scaffold protein carrying a second [4Fe-4S](2+) cluster] + N(6)-octanoyl-L-lysyl-[protein] + 2 oxidized [2Fe-2S]-[ferredoxin] + 2 S-adenosyl-L-methionine + 4 H(+) = [[Fe-S] cluster scaffold protein] + N(6)-[(R)-dihydrolipoyl]-L-lysyl-[protein] + 4 Fe(3+) + 2 hydrogen sulfide + 2 5'-deoxyadenosine + 2 L-methionine + 2 reduced [2Fe-2S]-[ferredoxin]. Its pathway is protein modification; protein lipoylation via endogenous pathway; protein N(6)-(lipoyl)lysine from octanoyl-[acyl-carrier-protein]: step 2/2. Its function is as follows. Catalyzes the radical-mediated insertion of two sulfur atoms into the C-6 and C-8 positions of the octanoyl moiety bound to the lipoyl domains of lipoate-dependent enzymes, thereby converting the octanoylated domains into lipoylated derivatives. The sequence is that of Lipoyl synthase from Photorhabdus laumondii subsp. laumondii (strain DSM 15139 / CIP 105565 / TT01) (Photorhabdus luminescens subsp. laumondii).